We begin with the raw amino-acid sequence, 276 residues long: MSSFEGKVAVITGAGSGIGRALALNLSEKRAKLALSDVDTDGLAKTVRLAQALGAQVKSDRLDVAEREAVLAHADAVVAHFGTVHQVYNNAGIAYNGNVDKSEFKDIERIIDVDFWGVVNGTKAFLPHVIASGDGHIVNISSLFGLIAVPGQSAYNAAKFAVRGFTEALRQEMLVARHPVKVTCVHPGGIKTAVARNATVADGEDQQTFAEFFDRRLALHSPEMAAKTIVNGVAKGQARVVVGLEAKAVDVLARIMGSSYQRLVAAGVAKFFPWAK.

S142 contributes to the substrate binding site. Y155 (proton acceptor) is an active-site residue.

It belongs to the short-chain dehydrogenases/reductases (SDR) family.

Required for maintaining the appropriate mycolic acid composition and permeability of the envelope on its exposure to acidic pH. The protein is Putative oxidoreductase SadH (sadH) of Mycobacterium tuberculosis (strain CDC 1551 / Oshkosh).